A 610-amino-acid polypeptide reads, in one-letter code: MDSPSTSESPLKKNTIQDFGESNMTESPQSKEEIDEPEEECSVCKNEIIDTTSLSDCCHEFCYDCIVGWLTKGSGPFCPMCKTPVSFIQRKGTDEKITVQQIKSEGEPAATASEDLVTEKRIVSRKIRSCRRLMNQIDEIIGATSSRSDSQKRKPRLEELNSMKQLCVSQLNSLQMLRDDIDHGAAKALIVSKAAFRRLIYERQVISEGLPDATNSLSKTEFRDNIDHYRAVLHSFLSVELKSLPAKTQPRVDNENSWYFYTLHDVAEGKDEEIINRIFSMIEDRGTRDLNAREVDAALNGLVSCRVVIAFIAELKSLINSRKSFLEWCGAITYRIRTDRGGESAGNDVVTVDDSIELEPEENRSNHRSRRFPVFTPFDRVFGSTMGHMYRGQPQAPLRLGPNATNPFRPAPLPVPSQLPIAGIPWAELTTSSAGAGSARSRGSDSVVEIDDDDDNDGVDVDDDDREDSDEPRTYSNSEEDSDEEIQVVERDDTIILDDSNRSLPKPVANGSADRKRKYEFPLEDHWKKAKTSQLPEGLVDDVQELIAKYNMPLTQSMNMLVGAAQEAIIRINKPMPSTSSAPDISKFKPDDMLQLASYLSRTGALSRRQ.

The segment covering 1–28 (MDSPSTSESPLKKNTIQDFGESNMTESP) has biased composition (polar residues). A disordered region spans residues 1 to 36 (MDSPSTSESPLKKNTIQDFGESNMTESPQSKEEIDE). An RING-type zinc finger spans residues 41–82 (CSVCKNEIIDTTSLSDCCHEFCYDCIVGWLTKGSGPFCPMCK). 2 disordered regions span residues 390-411 (YRGQ…FRPA) and 431-515 (TSSA…SADR). The span at 432-447 (SSAGAGSARSRGSDSV) shows a compositional bias: low complexity. 2 stretches are compositionally biased toward acidic residues: residues 448–470 (VEID…EDSD) and 478–487 (SEEDSDEEIQ).

This is an uncharacterized protein from Caenorhabditis elegans.